The primary structure comprises 372 residues: Virion morphogenesis protein OPG132 (372 aa).

Belongs to the orthopoxvirus OPG132 family.

Its subcellular location is the host cytoplasm. It is found in the virion. Lipid-bound viral membrane assembly protein that plays an essential role in immature virion (IV) to mature virion (MV) transition. Functions in both crescent-shaped viral membranes formation and its enclosure to form immature virions. In addition, participates in targeting mature virion proteins to sites of virion assembly to ensure their correct localization. The sequence is that of Virion morphogenesis protein OPG132 (OPG132) from Homo sapiens (Human).